The primary structure comprises 644 residues: Chaperone protein DnaK (644 aa).

The residue at position 195 (threonine 195) is a Phosphothreonine; by autocatalysis. The tract at residues 598 to 644 (KQAAPGAGAPGAGPGPEAAGGAQQAQAEPKKDEGVIDAEYVDVDEKK) is disordered. Residues 612–624 (GPEAAGGAQQAQA) are compositionally biased toward low complexity. The segment covering 632 to 644 (VIDAEYVDVDEKK) has biased composition (acidic residues).

The protein belongs to the heat shock protein 70 family.

Acts as a chaperone. The chain is Chaperone protein DnaK from Koribacter versatilis (strain Ellin345).